The following is a 229-amino-acid chain: MAKKGKKYQEAASKVDRTQHYSVEEAIKLAKETSIANFDASVEVAFRLGIDTRKNDQQIRGAVVLPNGTGKSQSVLVFAKGDKIAEAEAAGADYVGEAEYVQKIQQGWFDFDVVVATPDMMGEVGKLGRVLGPKGLMPNPKTGTVTMDVKKAVEEIKAGKVEYRAEKAGIVHASIGKVSFTDEQLIENFNTLQDVLAKAKPSSAKGTYFKSVAVTTTMGPGVKIDTASL.

The protein belongs to the universal ribosomal protein uL1 family. In terms of assembly, part of the 50S ribosomal subunit.

Binds directly to 23S rRNA. The L1 stalk is quite mobile in the ribosome, and is involved in E site tRNA release. Functionally, protein L1 is also a translational repressor protein, it controls the translation of the L11 operon by binding to its mRNA. This chain is Large ribosomal subunit protein uL1, found in Staphylococcus aureus (strain MRSA252).